Here is a 77-residue protein sequence, read N- to C-terminus: Large ribosomal subunit protein bL28 (77 aa).

This sequence belongs to the bacterial ribosomal protein bL28 family.

The polypeptide is Large ribosomal subunit protein bL28 (Polaromonas sp. (strain JS666 / ATCC BAA-500)).